The sequence spans 293 residues: 4-hydroxy-tetrahydrodipicolinate synthase (293 aa).

T47 serves as a coordination point for pyruvate. Y135 acts as the Proton donor/acceptor in catalysis. K164 (schiff-base intermediate with substrate) is an active-site residue. Residue I206 coordinates pyruvate.

It belongs to the DapA family. As to quaternary structure, homotetramer; dimer of dimers.

It is found in the cytoplasm. The catalysed reaction is L-aspartate 4-semialdehyde + pyruvate = (2S,4S)-4-hydroxy-2,3,4,5-tetrahydrodipicolinate + H2O + H(+). The protein operates within amino-acid biosynthesis; L-lysine biosynthesis via DAP pathway; (S)-tetrahydrodipicolinate from L-aspartate: step 3/4. Functionally, catalyzes the condensation of (S)-aspartate-beta-semialdehyde [(S)-ASA] and pyruvate to 4-hydroxy-tetrahydrodipicolinate (HTPA). This Flavobacterium psychrophilum (strain ATCC 49511 / DSM 21280 / CIP 103535 / JIP02/86) protein is 4-hydroxy-tetrahydrodipicolinate synthase.